Consider the following 234-residue polypeptide: MQHWLDKLTDLAAIEGDECILKTGLADIADHFGFTGYAYLHIQHRHITAVTNYHRQWQSTYFDKKFEALDPVVKRARSRKHIFTWSGEHERPTLSKDERAFYDHASDFGIRSGITIPIKTANGFMSMFTMASDKPVIDLDREIDAVAAAATIGQIHARISFLRTTPTAEDAAWLDPKEATYLRWIAVGKTMEEIADVEGVKYNSVRVKLREAMKRFDVRSKAHLTALAIRRKLI.

In terms of domain architecture, HTH luxR-type spans 167 to 232 (TAEDAAWLDP…HLTALAIRRK (66 aa)). The segment at residues 191–210 (MEEIADVEGVKYNSVRVKLR) is a DNA-binding region (H-T-H motif).

It belongs to the autoinducer-regulated transcriptional regulatory protein family.

Its function is as follows. Positive regulation of conjugal transfer of Ti plasmids. TraR activates target genes in the presence of AAI and also activates traR and traI themselves. The sequence is that of Transcriptional activator protein TraR (traR) from Rhizobium radiobacter (Agrobacterium tumefaciens).